A 622-amino-acid chain; its full sequence is Apical membrane antigen 1 (622 aa).

The first 24 residues, 1–24 (MRKLYCVLLLSAFEFTYMINFGRG), serve as a signal peptide directing secretion. Residues 25–546 (QNYWEHPYQN…EHKPTYDNMK (522 aa)) are Extracellular-facing. Disulfide bonds link Cys-149–Cys-302, Cys-217–Cys-247, Cys-263–Cys-275, Cys-320–Cys-418, and Cys-337–Cys-409. The N-linked (GlcNAc...) asparagine glycan is linked to Asn-162. Residues Asn-286, Asn-371, Asn-421, Asn-422, and Asn-499 are each glycosylated (N-linked (GlcNAc...) asparagine). 3 disulfides stabilise this stretch: Cys-443/Cys-502, Cys-490/Cys-507, and Cys-492/Cys-509. The helical transmembrane segment at 547 to 567 (IIIASSAAVAVLATILMVYLY) threads the bilayer. The Cytoplasmic segment spans residues 568–622 (KRKGNAEKYDKMDQPQDYGKSTSRNDEMLDPEASFWGEEKRASHTTPVLMEKPYY). A disordered region spans residues 577–607 (DKMDQPQDYGKSTSRNDEMLDPEASFWGEEK).

This sequence belongs to the apicomplexan parasites AMA1 family.

Its subcellular location is the membrane. Functionally, involved in parasite invasion of erythrocytes. This Plasmodium falciparum (isolate Camp / Malaysia) protein is Apical membrane antigen 1 (AMA-1).